A 218-amino-acid chain; its full sequence is GILT-like protein ZK669.3 (218 aa).

Residues 1-21 (MRRLNGVFICLILFITKISYA) form the signal peptide. 2 N-linked (GlcNAc...) asparagine glycosylation sites follow: Asn-129 and Asn-185.

Belongs to the GILT family.

Its subcellular location is the secreted. This Caenorhabditis elegans protein is GILT-like protein ZK669.3.